Here is a 331-residue protein sequence, read N- to C-terminus: 2-keto-3-deoxygluconate permease (331 aa).

Helical transmembrane passes span 10-30 (IPGG…TLAP), 42-62 (GMIS…GASI), 77-97 (LVLT…MFIP), 100-120 (GIQT…AMDM), 141-161 (AFVL…LGSA), 163-183 (LASF…IGFA), 200-220 (PVLI…NVIM), 224-244 (LLGI…LIIA), 254-274 (TAGV…MIIA), and 289-309 (ALVA…TALY).

Belongs to the KdgT transporter family.

Its subcellular location is the cell inner membrane. It catalyses the reaction 2-dehydro-3-deoxy-D-gluconate(in) + H(+)(in) = 2-dehydro-3-deoxy-D-gluconate(out) + H(+)(out). Its function is as follows. Catalyzes the proton-dependent uptake of 2-keto-3-deoxygluconate (KDG) into the cell. The protein is 2-keto-3-deoxygluconate permease of Enterobacter sp. (strain 638).